Here is a 53-residue protein sequence, read N- to C-terminus: uncharacterized protein (53 aa).

This is an uncharacterized protein from Rickettsia conorii (strain ATCC VR-613 / Malish 7).